The sequence spans 72 residues: BBSome-interacting protein 1 (72 aa).

Belongs to the BBIP10 family.

The protein localises to the cell projection. The protein resides in the cilium. Its subcellular location is the cytoplasm. Functionally, required for primary cilia assembly. This Danio rerio (Zebrafish) protein is BBSome-interacting protein 1 (bbip1).